The sequence spans 37 residues: MKVRASVKAMCKDCKNIKRKGIRRIICIQPKHKQRQG.

It belongs to the bacterial ribosomal protein bL36 family.

In Mycoplasmopsis pulmonis (strain UAB CTIP) (Mycoplasma pulmonis), this protein is Large ribosomal subunit protein bL36.